A 301-amino-acid polypeptide reads, in one-letter code: Putative phosphoenolpyruvate synthase regulatory protein (301 aa).

Positions 1-24 (MSEPVAPDGAQPAPAGATPQPLQP) are enriched in low complexity. A disordered region spans residues 1-27 (MSEPVAPDGAQPAPAGATPQPLQPIAG). Residue 181-188 (GVSRSGKT) participates in ADP binding.

Belongs to the pyruvate, phosphate/water dikinase regulatory protein family. PSRP subfamily.

It carries out the reaction [pyruvate, water dikinase] + ADP = [pyruvate, water dikinase]-phosphate + AMP + H(+). The catalysed reaction is [pyruvate, water dikinase]-phosphate + phosphate + H(+) = [pyruvate, water dikinase] + diphosphate. In terms of biological role, bifunctional serine/threonine kinase and phosphorylase involved in the regulation of the phosphoenolpyruvate synthase (PEPS) by catalyzing its phosphorylation/dephosphorylation. The protein is Putative phosphoenolpyruvate synthase regulatory protein of Cupriavidus pinatubonensis (strain JMP 134 / LMG 1197) (Cupriavidus necator (strain JMP 134)).